The following is a 586-amino-acid chain: Terminase, large subunit (586 aa).

Positions 1–229 are ATPase activity; the sequence is MSTQSNRNAL…TIIWPALYPR (229 aa). Positions 58–65 match the Walker A motif motif; the sequence is AFRGIGKS. Positions 156-161 match the Walker B motif motif; that stretch reads IIIADD. Positions 344–429 are nuclease activity; it reads HSYHSCSQNT…ESNFGDGMFG (86 aa). Residues D364, E420, and D518 each coordinate Mg(2+). Residues 571 to 586 are involved in prohead binding; sequence LYWEDDDVNGDRFINW.

It belongs to the Teseptimavirus large terminase family. As to quaternary structure, homopentamer. Interacts with the terminase small subunit; the active complex is probably heterooligomeric. Interacts with the portal protein. Mg(2+) serves as cofactor.

The terminase large subunit acts as an ATP driven molecular motor necessary for viral DNA translocation into empty capsids and as an endonuclease that cuts the viral genome at a unique and precise dsDNA sequence to initiate and to end a packaging reaction. The terminase lies at a unique vertex of the procapsid and is composed of two subunits, a small terminase subunit involved in viral DNA recognition (packaging sequence), and a large terminase subunit possessing endonucleolytic and ATPase activities. Both terminase subunits heterooligomerize and are docked on the portal protein to form the packaging machine. The terminase large subunit exhibits endonuclease activity and cleaves the viral genome concatemer. Once the DNA is packaged, the terminase detaches from the connector and gets replaced by the tail to finish maturation of the virion. The polypeptide is Terminase, large subunit (19) (Escherichia coli (Bacteriophage T3)).